The chain runs to 236 residues: uncharacterized protein (236 aa).

This is an uncharacterized protein from Ureaplasma parvum serovar 3 (strain ATCC 700970).